A 663-amino-acid chain; its full sequence is CXXC-type zinc finger protein 1 (663 aa).

The PHD-type zinc-finger motif lies at 60-110; sequence QAYCICRSSDCSRFMIGCDGCEEWYHGDCIGITEKEAKHIKQYYCRRCKKE. The span at 134–161 shows a compositional bias: low complexity; that stretch reads TSLNAPGVGPSGAAPAAAPVASATTSQQ. Residues 134 to 183 are disordered; the sequence is TSLNAPGVGPSGAAPAAAPVASATTSQQAPPPTTAAAKRKNSSAREPKMG. Residues 175 to 219 form a CXXC-type zinc finger; sequence SSAREPKMGKRCGTCEGCRRPNCNQCDACRVRVGHKPRCIFRTCV. Positions 186, 189, 192, 197, 200, 203, 213, and 218 each coordinate Zn(2+). Residues 230–254 form a disordered region; it reads QATQAGPSRKREKAAPKSRNVQVGP. Ser-258 bears the Phosphoserine mark.

In terms of assembly, component of the SET1 complex, composed at least of the catalytic subunit Set1, wds/WDR5, Wdr82, Rbbp5, ash2, Cfp1/CXXC1, hcf and Dpy-30L1.

It is found in the nucleus. Component of the SET1 complex that specifically di- and trimethylates 'Lys-4' of histone H3. Essential for Set1 association with chromatin and trimethylation of histone H3 at 'Lys-4' at transcription puffs. Additionally, is critical for general chromosomal association of Set1. This is CXXC-type zinc finger protein 1 (Cfp1) from Drosophila melanogaster (Fruit fly).